The sequence spans 672 residues: Nuclear hormone receptor family member nhr-5 (672 aa).

A compositionally biased stretch (low complexity) spans 1–19 (MSSGGNSSNVNRNSGSSNV). Residues 1–38 (MSSGGNSSNVNRNSGSSNVITLNDSDEETEDSNLGSSS) are disordered. A DNA-binding region (nuclear receptor) is located at residues 40 to 115 (TNLCKVCGAE…EGMNPAYVRP (76 aa)). NR C4-type zinc fingers lie at residues 43–63 (CKVCGAEKAALHYGALSCVGC) and 79–98 (CAANGECTVSVLQKTQCRSC). Residues 155 to 424 (EMRTILMTLL…PLLTDLFGCF (270 aa)) form the NR LBD domain. A disordered region spans residues 550-577 (NIQGPSHLPQCGSTVTQRPTVPSSTTSS). Over residues 562-577 (STVTQRPTVPSSTTSS) the composition is skewed to low complexity.

This sequence belongs to the nuclear hormone receptor family.

It localises to the nucleus. Its function is as follows. Orphan nuclear receptor. This Caenorhabditis elegans protein is Nuclear hormone receptor family member nhr-5 (nhr-5).